A 62-amino-acid chain; its full sequence is Large ribosomal subunit protein bL28 (62 aa).

Residues 1–27 (MARKCVVTGRQTRSGNQRSHAMNSNKR) are disordered. Positions 9–26 (GRQTRSGNQRSHAMNSNK) are enriched in polar residues.

Belongs to the bacterial ribosomal protein bL28 family.

The sequence is that of Large ribosomal subunit protein bL28 from Oceanobacillus iheyensis (strain DSM 14371 / CIP 107618 / JCM 11309 / KCTC 3954 / HTE831).